The sequence spans 301 residues: Homoserine O-acetyltransferase (301 aa).

The active-site Acyl-thioester intermediate is Cys-142. Residues Lys-163 and Ser-192 each coordinate substrate. His-235 acts as the Proton acceptor in catalysis. The active site involves Glu-237. Position 249 (Arg-249) interacts with substrate.

This sequence belongs to the MetA family.

It is found in the cytoplasm. It carries out the reaction L-homoserine + acetyl-CoA = O-acetyl-L-homoserine + CoA. The protein operates within amino-acid biosynthesis; L-methionine biosynthesis via de novo pathway; O-acetyl-L-homoserine from L-homoserine: step 1/1. Transfers an acetyl group from acetyl-CoA to L-homoserine, forming acetyl-L-homoserine. The polypeptide is Homoserine O-acetyltransferase (Bacillus thuringiensis subsp. konkukian (strain 97-27)).